A 319-amino-acid polypeptide reads, in one-letter code: tRNA uridine(34) hydroxylase (319 aa).

The Rhodanese domain maps to L124–E218. The Cysteine persulfide intermediate role is filled by C178.

The protein belongs to the TrhO family.

The enzyme catalyses uridine(34) in tRNA + AH2 + O2 = 5-hydroxyuridine(34) in tRNA + A + H2O. Its function is as follows. Catalyzes oxygen-dependent 5-hydroxyuridine (ho5U) modification at position 34 in tRNAs. The chain is tRNA uridine(34) hydroxylase from Listeria monocytogenes serotype 4a (strain HCC23).